The following is a 229-amino-acid chain: MTLAKPGSGSQSRMDDKAHFKSRVIRDRATFAEEELGSSDVSDPAMVAAVETLLRGIGEDPQREGLRKTPERVVAALKFLTSGYRQSLEELLNSAIFDEGHDEMVLLRDVSLFSLCEHHLLPFIGKAHVAYIPKQKVVGLSKIARIVEMYSRRLQVQERLTRQIAEALMEVLDPYGVGVVIEATHMCMVMRGVQKAGSWTVTSSMVGVFQEDPRTREEFLSLIRHPSNF.

Positions Met-1–Lys-21 are disordered. Zn(2+) contacts are provided by Cys-116, His-119, and Cys-187.

It belongs to the GTP cyclohydrolase I family. Toroid-shaped homodecamer, composed of two pentamers of five dimers.

The catalysed reaction is GTP + H2O = 7,8-dihydroneopterin 3'-triphosphate + formate + H(+). The protein operates within cofactor biosynthesis; 7,8-dihydroneopterin triphosphate biosynthesis; 7,8-dihydroneopterin triphosphate from GTP: step 1/1. This is GTP cyclohydrolase 1 from Synechococcus sp. (strain JA-2-3B'a(2-13)) (Cyanobacteria bacterium Yellowstone B-Prime).